Reading from the N-terminus, the 579-residue chain is Vitamin B6 transporter TPN1 (579 aa).

Residues 1-98 are Cytoplasmic-facing; sequence MNRDNMDTTK…LHVAGLWLSA (98 aa). Residues 99–119 form a helical membrane-spanning segment; it reads TGGLSSMSSFLLGPLLFGLSF. The Extracellular segment spans residues 120-122; sequence RES. A helical transmembrane segment spans residues 123–143; sequence VASSLISVTIGCLIAAYCSIM. Residues 144-157 lie on the Cytoplasmic side of the membrane; that stretch reads GPQSGCRQMVTARY. Residues 158–178 form a helical membrane-spanning segment; the sequence is LFGWWFVKLVALASIIGVMGW. The Extracellular portion of the chain corresponds to 179–198; it reads SVVNSVVGGEMLAAISNDKV. A helical transmembrane segment spans residues 199-219; that stretch reads PLWVGIVIVTVCSFLVAIFGI. The Cytoplasmic portion of the chain corresponds to 220 to 221; that stretch reads KQ. The chain crosses the membrane as a helical span at residues 222-242; it reads VIKVETYLSVPVLTAFLLLYI. Topologically, residues 243–274 are extracellular; it reads SSSDKYSFVNAYVSKGNLDSSTRKGNWMSFFS. Residues 275–295 form a helical membrane-spanning segment; sequence LCYSITATWGSITADYYILFP. Residues 296–302 are Cytoplasmic-facing; that stretch reads EDTPYIQ. Residues 303 to 323 form a helical membrane-spanning segment; sequence IFCLTFFGTFLPTCFVGILGL. Over 324-362 the chain is Extracellular; it reads LLASVAMSYKPWSVEYDSHGMGGLLWAGFQRWNGFGKFC. The helical transmembrane segment at 363–383 threads the bilayer; the sequence is VVVLVFSLVSNNIINTYSAAF. Residues 384-394 are Cytoplasmic-facing; that stretch reads SIQLSSVFCAK. The helical transmembrane segment at 395–415 threads the bilayer; it reads IPRWFWSIVCTIICLVCALIG. The Extracellular segment spans residues 416-421; sequence RNHFST. The helical transmembrane segment at 422-442 threads the bilayer; sequence ILGNFLPMIGYWISMYFILLF. Residues 443 to 519 lie on the Cytoplasmic side of the membrane; it reads EENLVFRRFF…EVLTHGYAAT (77 aa). Residues 520–540 form a helical membrane-spanning segment; sequence FAFIVGVAGVVVGMAQAYWIG. Over 541–545 the chain is Extracellular; that stretch reads PIAAK. Residues 546 to 566 traverse the membrane as a helical segment; it reads FGEYGGDVAMWLSMAFSGVVY. Residues 567–579 are Cytoplasmic-facing; that stretch reads PPCRYLELRKFGR.

This sequence belongs to the purine-cytosine permease (2.A.39) family.

It localises to the membrane. Its function is as follows. Thiamine-regulated, high affinity import carrier of pyridoxine, pyridoxal and pyridoxamine. In Saccharomyces cerevisiae (strain ATCC 204508 / S288c) (Baker's yeast), this protein is Vitamin B6 transporter TPN1 (TPN1).